The following is an 84-amino-acid chain: Small ribosomal subunit protein uS17 (84 aa).

Belongs to the universal ribosomal protein uS17 family. As to quaternary structure, part of the 30S ribosomal subunit.

In terms of biological role, one of the primary rRNA binding proteins, it binds specifically to the 5'-end of 16S ribosomal RNA. In Caldanaerobacter subterraneus subsp. tengcongensis (strain DSM 15242 / JCM 11007 / NBRC 100824 / MB4) (Thermoanaerobacter tengcongensis), this protein is Small ribosomal subunit protein uS17.